We begin with the raw amino-acid sequence, 945 residues long: Chaperone protein ClpD, chloroplastic (945 aa).

Residues 1–89 (MEVLSTSSPL…FERFTERAIR (89 aa)) constitute a chloroplast transit peptide. 2 repeat regions span residues 90-146 (AIIF…WDEA) and 168-233 (FSIS…LKGE). Residues 90-233 (AIIFSQKEAK…AAALTRLKGE (144 aa)) enclose the Clp R domain. The disordered stretch occupies residues 233 to 264 (EIAKDGREPSSSSKGSFESPPSGRIAGSGPGG). Over residues 241–255 (PSSSSKGSFESPPSG) the composition is skewed to low complexity. Positions 271–523 (LEQFCVDLTA…RARIEAFRKK (253 aa)) are i. Position 316-323 (316-323 (GEAGVGKT)) interacts with ATP. The segment at 555-586 (SRQKQDDGDAISDESGELVEESSLPPAAGDDE) is disordered. Acidic residues predominate over residues 562-574 (GDAISDESGELVE). The tract at residues 590–781 (VGPDDIAAVA…LIIMTSNVGS (192 aa)) is II. 664 to 671 (GPTGVGKT) contributes to the ATP binding site.

Belongs to the ClpA/ClpB family. ClpD subfamily. Homodimer and homohexamer. Hexamerization upon addition of ATP. Interacts with CLPT1. Stably associated with the import machinery. Mg(2+) is required as a cofactor. As to expression, expressed in stems and leaves.

The protein resides in the plastid. Its subcellular location is the chloroplast stroma. The catalysed reaction is ATP + H2O = ADP + phosphate + H(+). Functionally, molecular chaperone that interact with a ClpP-like protease involved in degradation of denatured proteins in the chloroplast. The ATPase activity of CLPD is stimulated by CLPT1. Has no ADPase activity. Interacts with transit peptides with a positional preference. Localization of the signal sequence at the N-terminal end of a protein seems mandatory for interaction to take place. In Arabidopsis thaliana (Mouse-ear cress), this protein is Chaperone protein ClpD, chloroplastic.